Reading from the N-terminus, the 402-residue chain is S-adenosylmethionine synthase (402 aa).

Residue His-16 participates in ATP binding. Residue Asp-18 coordinates Mg(2+). Glu-44 contacts K(+). L-methionine-binding residues include Glu-57 and Gln-103. Residues 103 to 113 (QSPDIAQGVDT) are flexible loop. ATP-binding positions include 178–180 (DGK), 249–250 (KF), Asp-258, 264–265 (RK), Ala-281, and Lys-285. Residue Asp-258 participates in L-methionine binding. Lys-289 contributes to the L-methionine binding site.

This sequence belongs to the AdoMet synthase family. Homotetramer; dimer of dimers. Requires Mg(2+) as cofactor. It depends on K(+) as a cofactor.

It is found in the cytoplasm. The enzyme catalyses L-methionine + ATP + H2O = S-adenosyl-L-methionine + phosphate + diphosphate. The protein operates within amino-acid biosynthesis; S-adenosyl-L-methionine biosynthesis; S-adenosyl-L-methionine from L-methionine: step 1/1. Its function is as follows. Catalyzes the formation of S-adenosylmethionine (AdoMet) from methionine and ATP. The overall synthetic reaction is composed of two sequential steps, AdoMet formation and the subsequent tripolyphosphate hydrolysis which occurs prior to release of AdoMet from the enzyme. The sequence is that of S-adenosylmethionine synthase from Mycolicibacterium gilvum (strain PYR-GCK) (Mycobacterium gilvum (strain PYR-GCK)).